The chain runs to 262 residues: uncharacterized protein (262 aa).

Positions 1 to 22 (MGYLKRFALYISVMILIFAIAG) are cleaved as a signal peptide. Cysteine 23 carries N-palmitoyl cysteine lipidation. Cysteine 23 carries S-diacylglycerol cysteine lipidation.

It belongs to the staphylococcal tandem lipoprotein family.

Its subcellular location is the cell membrane. This is an uncharacterized protein from Staphylococcus aureus (strain NCTC 8325 / PS 47).